The primary structure comprises 445 residues: 6-phosphogluconate dehydrogenase, decarboxylating (445 aa).

Residues alanine 1–glycine 4, asparagine 22–serine 24, valine 63–alanine 65, and asparagine 91 contribute to the NADP(+) site. Residues asparagine 91 and serine 117 to glycine 119 each bind substrate. Lysine 172 serves as the catalytic Proton acceptor. Residue histidine 175–asparagine 176 participates in substrate binding. Glutamate 179 functions as the Proton donor in the catalytic mechanism. Substrate is bound by residues tyrosine 180, lysine 249, arginine 276, arginine 434, and histidine 440.

Belongs to the 6-phosphogluconate dehydrogenase family. Homodimer.

It catalyses the reaction 6-phospho-D-gluconate + NADP(+) = D-ribulose 5-phosphate + CO2 + NADPH. It participates in carbohydrate degradation; pentose phosphate pathway; D-ribulose 5-phosphate from D-glucose 6-phosphate (oxidative stage): step 3/3. In terms of biological role, catalyzes the oxidative decarboxylation of 6-phosphogluconate to ribulose 5-phosphate and CO(2), with concomitant reduction of NADP to NADPH. This Raoultella terrigena (Klebsiella terrigena) protein is 6-phosphogluconate dehydrogenase, decarboxylating (gnd).